We begin with the raw amino-acid sequence, 168 residues long: Cell division inhibitor SulA (168 aa).

The interval 105–111 (ALLTGNY) is ftsZ binding. The segment at 161-168 (KIHSTLYH) is lon protease binding.

The protein belongs to the SulA family. In terms of assembly, interacts with FtsZ. Is rapidly cleaved and degraded by the Lon protease once DNA damage is repaired.

Component of the SOS system and an inhibitor of cell division. Accumulation of SulA causes rapid cessation of cell division and the appearance of long, non-septate filaments. In the presence of GTP, binds a polymerization-competent form of FtsZ in a 1:1 ratio, thus inhibiting FtsZ polymerization and therefore preventing it from participating in the assembly of the Z ring. This mechanism prevents the premature segregation of damaged DNA to daughter cells during cell division. The polypeptide is Cell division inhibitor SulA (Pectobacterium carotovorum subsp. carotovorum (strain PC1)).